Consider the following 140-residue polypeptide: 3-hydroxyacyl-[acyl-carrier-protein] dehydratase FabZ (140 aa).

Residue histidine 47 is part of the active site.

This sequence belongs to the thioester dehydratase family. FabZ subfamily.

The protein localises to the cytoplasm. It catalyses the reaction a (3R)-hydroxyacyl-[ACP] = a (2E)-enoyl-[ACP] + H2O. Functionally, involved in unsaturated fatty acids biosynthesis. Catalyzes the dehydration of short chain beta-hydroxyacyl-ACPs and long chain saturated and unsaturated beta-hydroxyacyl-ACPs. This chain is 3-hydroxyacyl-[acyl-carrier-protein] dehydratase FabZ, found in Streptococcus gordonii (strain Challis / ATCC 35105 / BCRC 15272 / CH1 / DL1 / V288).